The primary structure comprises 155 residues: Endoribonuclease YbeY (155 aa).

His-114, His-118, and His-124 together coordinate Zn(2+).

Belongs to the endoribonuclease YbeY family. It depends on Zn(2+) as a cofactor.

The protein localises to the cytoplasm. Single strand-specific metallo-endoribonuclease involved in late-stage 70S ribosome quality control and in maturation of the 3' terminus of the 16S rRNA. In Salmonella arizonae (strain ATCC BAA-731 / CDC346-86 / RSK2980), this protein is Endoribonuclease YbeY.